The primary structure comprises 154 residues: Neurotrophin-3 (154 aa).

The first 18 residues, 1–18 (MSILFYVMFLAYLRGVQG), serve as a signal peptide directing secretion. Residues 19–134 (NSMDQRSLPE…VNSRSPRRKR (116 aa)) constitute a propeptide that is removed on maturation.

Belongs to the NGF-beta family.

The protein resides in the secreted. Functionally, seems to promote the survival of visceral and proprioceptive sensory neurons. This chain is Neurotrophin-3 (NTF3), found in Cervus elaphus (Red deer).